Here is a 281-residue protein sequence, read N- to C-terminus: 2,3,4,5-tetrahydropyridine-2,6-dicarboxylate N-succinyltransferase (281 aa).

2 residues coordinate substrate: Arg108 and Asp145.

Belongs to the transferase hexapeptide repeat family. As to quaternary structure, homotrimer.

It is found in the cytoplasm. The enzyme catalyses (S)-2,3,4,5-tetrahydrodipicolinate + succinyl-CoA + H2O = (S)-2-succinylamino-6-oxoheptanedioate + CoA. The protein operates within amino-acid biosynthesis; L-lysine biosynthesis via DAP pathway; LL-2,6-diaminopimelate from (S)-tetrahydrodipicolinate (succinylase route): step 1/3. The sequence is that of 2,3,4,5-tetrahydropyridine-2,6-dicarboxylate N-succinyltransferase from Nitrobacter winogradskyi (strain ATCC 25391 / DSM 10237 / CIP 104748 / NCIMB 11846 / Nb-255).